A 366-amino-acid chain; its full sequence is Ribosomal RNA large subunit methyltransferase M (366 aa).

S-adenosyl-L-methionine-binding positions include Ser188, Cys221–Gly224, Asp240, Asp260, and Asp277. Catalysis depends on Lys306, which acts as the Proton acceptor.

The protein belongs to the class I-like SAM-binding methyltransferase superfamily. RNA methyltransferase RlmE family. RlmM subfamily. Monomer.

It is found in the cytoplasm. The catalysed reaction is cytidine(2498) in 23S rRNA + S-adenosyl-L-methionine = 2'-O-methylcytidine(2498) in 23S rRNA + S-adenosyl-L-homocysteine + H(+). Its function is as follows. Catalyzes the 2'-O-methylation at nucleotide C2498 in 23S rRNA. The chain is Ribosomal RNA large subunit methyltransferase M from Escherichia coli O45:K1 (strain S88 / ExPEC).